The primary structure comprises 100 residues: Nucleoid-associated protein HPSH_00175 (100 aa).

It belongs to the YbaB/EbfC family. In terms of assembly, homodimer.

Its subcellular location is the cytoplasm. It localises to the nucleoid. Functionally, binds to DNA and alters its conformation. May be involved in regulation of gene expression, nucleoid organization and DNA protection. In Helicobacter pylori (strain Shi470), this protein is Nucleoid-associated protein HPSH_00175.